A 130-amino-acid chain; its full sequence is Small ribosomal subunit protein eS8 (130 aa).

It belongs to the eukaryotic ribosomal protein eS8 family. In terms of assembly, part of the 30S ribosomal subunit.

The protein is Small ribosomal subunit protein eS8 of Thermococcus gammatolerans (strain DSM 15229 / JCM 11827 / EJ3).